Consider the following 236-residue polypeptide: B-cell antigen receptor complex-associated protein alpha chain (236 aa).

An N-terminal signal peptide occupies residues 1–32; that stretch reads MPGGPGLLQALCATTFLLFLISAGGLGPGSQA. The region spanning 33 to 122 is the Ig-like C2-type domain; sequence LWVDGGPPSM…EKDLNQKILS (90 aa). At 33 to 151 the chain is on the extracellular side; that stretch reads LWVDGGPPSM…LDMGEGTKNN (119 aa). Cys-54 and Cys-109 are oxidised to a cystine. N-linked (GlcNAc...) asparagine glycosylation is found at Asn-66 and Asn-76. The chain crosses the membrane as a helical span at residues 152-172; the sequence is IITAEGIILLFCAVVPGTLLL. The Cytoplasmic portion of the chain corresponds to 173–236; that stretch reads FRKRWQNMKF…GDGDVQLEKP (64 aa). The region spanning 185–213 is the ITAM domain; sequence DAQDDYEDENLYEGLNLDDCSMYEDISRG. Tyr-196 bears the Phosphotyrosine; by SRC-type Tyr-kinases mark. Position 207 is a phosphotyrosine (Tyr-207). An Asymmetric dimethylarginine; by PRMT1 modification is found at Arg-212. Tyr-218 is modified (phosphotyrosine; by Tyr-kinases).

As to quaternary structure, heterodimer of alpha and beta chains; disulfide-linked. Part of the B-cell antigen receptor complex where the alpha/beta chain heterodimer is non-covalently associated with an antigen-specific membrane-bound surface immunoglobulin of two heavy chains and two light chains. Interacts through its phosphorylated ITAM domain with the SH2 domains of SYK which stimulates SYK autophosphorylation and activation. Also interacts, when phosphorylated on Tyr-207, with the SH2 domain of BLNK/SLP65, bringing BLNK into proximity with SYK and allowing SYK to phosphorylate BLNK which is necessary for trafficking of the BCR to late endosomes. Interacts with Src-family tyrosine kinases including FYN and LYN, increasing their activity. Post-translationally, phosphorylated on tyrosine, serine and threonine residues upon B-cell activation. Phosphorylation of tyrosine residues by Src-family kinases, including LYN, is an early and essential feature of the BCR signaling cascade. The phosphorylated tyrosines serve as docking sites for SH2-domain containing kinases, leading to their activation which in turn leads to phosphorylation of downstream targets. Phosphorylation of serine and threonine residues may prevent subsequent tyrosine phosphorylation. In terms of processing, arginine methylation in the ITAM domain may interfere with the binding of SYK. It promotes signals leading to B-cell differentiation.

It is found in the cell membrane. In terms of biological role, required in cooperation with CD79B for initiation of the signal transduction cascade activated by binding of antigen to the B-cell antigen receptor complex (BCR) which leads to internalization of the complex, trafficking to late endosomes and antigen presentation. Also required for BCR surface expression and for efficient differentiation of pro- and pre-B-cells. Stimulates SYK autophosphorylation and activation. Binds to BLNK, bringing BLNK into proximity with SYK and allowing SYK to phosphorylate BLNK. Also interacts with and increases activity of some Src-family tyrosine kinases. Represses BCR signaling during development of immature B-cells. This chain is B-cell antigen receptor complex-associated protein alpha chain (CD79A), found in Canis lupus familiaris (Dog).